The chain runs to 362 residues: MEVVMPRALLVLLSAALALTPTRAGSHSLRYFYTSVSRPGAGDPRFIAVGYVDDTQFVRFDSDAATGRMEPRAPWVEQEGPEYWDRQTRTIKETARTFRVDLDTLRGYYNQSEAGSHTRQTMYGCDLGPDGRLLRGYSQDAYDGADYIALNEDLRSWTAADTAAQITQRKWEAAGVAELQWRNYLETTCVEWLRRYLEMGKETLLRADPPSTRVTHHPVSDHEVTLRCWALGFYPAEITLTWQRDGEDQTQDTEVVDTRPAGDGTFQKWAAVVVPSGQEQRYTCHVQHEGLPEPITRRWEPSPLSTIVIVSIAALVLLVVAGVIGAVIWRKQRSGGKGPGYSHAARDDSAQGSDVSLTAPRV.

An N-terminal signal peptide occupies residues 1–24 (MEVVMPRALLVLLSAALALTPTRA). Positions 25–114 (GSHSLRYFYT…LRGYYNQSEA (90 aa)) are alpha-1. The Extracellular portion of the chain corresponds to 25–306 (GSHSLRYFYT…RRWEPSPLST (282 aa)). Asparagine 110 is a glycosylation site (N-linked (GlcNAc...) asparagine). Residues 115–207 (GSHTRQTMYG…EMGKETLLRA (93 aa)) form an alpha-2 region. 2 disulfide bridges follow: cysteine 125–cysteine 189 and cysteine 228–cysteine 284. The alpha-3 stretch occupies residues 208–299 (DPPSTRVTHH…GLPEPITRRW (92 aa)). The 87-residue stretch at 210-296 (PSTRVTHHPV…QHEGLPEPIT (87 aa)) folds into the Ig-like C1-type domain. Residues 300 to 306 (EPSPLST) form a connecting peptide region. The helical transmembrane segment at 307–329 (IVIVSIAALVLLVVAGVIGAVIW) threads the bilayer. The Cytoplasmic segment spans residues 330–362 (RKQRSGGKGPGYSHAARDDSAQGSDVSLTAPRV). The interval 333-362 (RSGGKGPGYSHAARDDSAQGSDVSLTAPRV) is disordered.

This sequence belongs to the MHC class I family. As to quaternary structure, heterodimer of an alpha chain and a beta chain (beta-2-microglobulin).

It is found in the membrane. In terms of biological role, involved in the presentation of foreign antigens to the immune system. The sequence is that of DLA class I histocompatibility antigen, A9/A9 alpha chain from Canis lupus familiaris (Dog).